The sequence spans 137 residues: Large ribosomal subunit protein uL16c (137 aa).

A disordered region spans residues 1 to 21; sequence MLSPKKTKYRKQHRGRMKGKA.

The protein belongs to the universal ribosomal protein uL16 family. As to quaternary structure, part of the 50S ribosomal subunit.

It is found in the plastid. The protein resides in the chloroplast. This chain is Large ribosomal subunit protein uL16c, found in Oedogonium cardiacum (Filamentous green alga).